The primary structure comprises 410 residues: Probable serine/threonine-protein kinase PBL8 (410 aa).

Basic and acidic residues predominate over residues 1-10 (MGNCGTRDEA). Residues 1 to 45 (MGNCGTRDEAAVFTPQAQAQQLQKKHSRSVSDLSDPSTPRFRDDS) form a disordered region. The N-myristoyl glycine moiety is linked to residue Gly2. Residue Cys4 is the site of S-palmitoyl cysteine attachment. Thr58 carries the phosphothreonine modification. The region spanning 69-350 (FRPDYILGEG…DVVETLEPLQ (282 aa)) is the Protein kinase domain. ATP is bound by residues 75 to 83 (LGEGGFGTV) and Lys104. Tyr149 carries the post-translational modification Phosphotyrosine. Asp199 (proton acceptor) is an active-site residue. Ser203 and Ser233 each carry phosphoserine. Residues Thr234 and Thr239 each carry the phosphothreonine modification. Phosphotyrosine is present on Tyr247.

This sequence belongs to the protein kinase superfamily. Ser/Thr protein kinase family. As to quaternary structure, interacts with the Xanthomonas campestris effector XopAC/AvrAC.

It localises to the cell membrane. It catalyses the reaction L-seryl-[protein] + ATP = O-phospho-L-seryl-[protein] + ADP + H(+). The enzyme catalyses L-threonyl-[protein] + ATP = O-phospho-L-threonyl-[protein] + ADP + H(+). May be involved in plant defense signaling. The chain is Probable serine/threonine-protein kinase PBL8 from Arabidopsis thaliana (Mouse-ear cress).